A 223-amino-acid polypeptide reads, in one-letter code: Small ribosomal subunit protein uS5 (223 aa).

The disordered stretch occupies residues 1 to 48 (MPGRQRRDGGSGPAGQNGPNSGDNSNARGDNRGGGRDRRDGGRGGNAA). Basic and acidic residues predominate over residues 29–42 (GDNRGGGRDRRDGG). One can recognise an S5 DRBM domain in the interval 53-116 (FIERVVTINR…EEARKSFFRV (64 aa)).

Belongs to the universal ribosomal protein uS5 family. In terms of assembly, part of the 30S ribosomal subunit. Contacts proteins S4 and S8.

Functionally, with S4 and S12 plays an important role in translational accuracy. In terms of biological role, located at the back of the 30S subunit body where it stabilizes the conformation of the head with respect to the body. The protein is Small ribosomal subunit protein uS5 of Rhodococcus erythropolis (strain PR4 / NBRC 100887).